The primary structure comprises 588 residues: Arylsulfatase L (588 aa).

The signal sequence occupies residues 1–31 (MLHLHHSWLCFRSWLAGMLSVLLGLVPSASS). N-linked (GlcNAc...) asparagine glycosylation is present at Asn-32. Residues Asp-46 and Asp-47 each coordinate Ca(2+). A glycan (N-linked (GlcNAc...) asparagine) is linked at Asn-58. A Ca(2+)-binding site is contributed by Cys-86. Residue Cys-86 is the Nucleophile of the active site. Cys-86 is subject to 3-oxoalanine (Cys). Asn-125 carries N-linked (GlcNAc...) asparagine glycosylation. Lys-145 is a binding site for substrate. The active site involves His-147. Asn-258 carries N-linked (GlcNAc...) asparagine glycosylation. Substrate is bound at residue His-301. The N-linked (GlcNAc...) asparagine glycan is linked to Asn-344. Residues Asp-353 and His-354 each contribute to the Ca(2+) site. Residue Lys-378 participates in substrate binding.

This sequence belongs to the sulfatase family. The cofactor is Ca(2+). In terms of processing, the conversion to 3-oxoalanine (also known as C-formylglycine, FGly), of a serine or cysteine residue in prokaryotes and of a cysteine residue in eukaryotes, is critical for catalytic activity.

The protein resides in the golgi apparatus. Its subcellular location is the golgi stack. The catalysed reaction is an aryl sulfate + H2O = a phenol + sulfate + H(+). Functionally, exhibits arylsulfatase activity towards the artificial substrate 4-methylumbelliferyl sulfate. May be essential for the correct composition of cartilage and bone matrix during development. Has no activity toward steroid sulfates. This Macaca fascicularis (Crab-eating macaque) protein is Arylsulfatase L (ARSL).